A 452-amino-acid polypeptide reads, in one-letter code: Trigger factor (452 aa).

Residues glycine 171 to threonine 256 form the PPIase FKBP-type domain.

It belongs to the FKBP-type PPIase family. Tig subfamily.

The protein localises to the cytoplasm. The catalysed reaction is [protein]-peptidylproline (omega=180) = [protein]-peptidylproline (omega=0). Functionally, involved in protein export. Acts as a chaperone by maintaining the newly synthesized protein in an open conformation. Functions as a peptidyl-prolyl cis-trans isomerase. The sequence is that of Trigger factor from Rhodopseudomonas palustris (strain ATCC BAA-98 / CGA009).